We begin with the raw amino-acid sequence, 132 residues long: uncharacterized protein (132 aa).

Transmembrane regions (helical) follow at residues tryptophan 6–serine 26, asparagine 34–phenylalanine 54, threonine 59–tyrosine 79, and isoleucine 106–isoleucine 126.

The protein resides in the cell membrane. This is an uncharacterized protein from Bacillus subtilis (strain 168).